The primary structure comprises 32 residues: uncharacterized protein (32 aa).

This is an uncharacterized protein from Saccharolobus islandicus (Sulfolobus islandicus).